The chain runs to 366 residues: Aminomethyltransferase (366 aa).

This sequence belongs to the GcvT family. In terms of assembly, the glycine cleavage system is composed of four proteins: P, T, L and H.

The catalysed reaction is N(6)-[(R)-S(8)-aminomethyldihydrolipoyl]-L-lysyl-[protein] + (6S)-5,6,7,8-tetrahydrofolate = N(6)-[(R)-dihydrolipoyl]-L-lysyl-[protein] + (6R)-5,10-methylene-5,6,7,8-tetrahydrofolate + NH4(+). In terms of biological role, the glycine cleavage system catalyzes the degradation of glycine. This Bacillus cytotoxicus (strain DSM 22905 / CIP 110041 / 391-98 / NVH 391-98) protein is Aminomethyltransferase.